The chain runs to 155 residues: UPF0225 protein PC1_1977 (155 aa).

Belongs to the UPF0225 family.

The protein is UPF0225 protein PC1_1977 of Pectobacterium carotovorum subsp. carotovorum (strain PC1).